Reading from the N-terminus, the 232-residue chain is RNA chaperone ProQ (232 aa).

A disordered region spans residues 105 to 182 (EAKARVQAQR…REEQHTPVSD (78 aa)). Over residues 117–136 (QQAKKREAAAAAGEKEDAPR) the composition is skewed to basic and acidic residues. The span at 137–146 (RERKPRPTTP) shows a compositional bias: basic residues. Residues 147–177 (RRKEGAERKPRAQKSVEKAPKTVKAPREEQH) are compositionally biased toward basic and acidic residues.

It belongs to the ProQ family.

The protein resides in the cytoplasm. Its function is as follows. RNA chaperone with significant RNA binding, RNA strand exchange and RNA duplexing activities. May regulate ProP activity through an RNA-based, post-transcriptional mechanism. This is RNA chaperone ProQ from Escherichia coli O7:K1 (strain IAI39 / ExPEC).